Here is a 253-residue protein sequence, read N- to C-terminus: Hydroxyacylglutathione hydrolase (253 aa).

Positions 54, 56, 58, 59, 112, 131, and 169 each coordinate Zn(2+).

The protein belongs to the metallo-beta-lactamase superfamily. Glyoxalase II family. Monomer. It depends on Zn(2+) as a cofactor.

It catalyses the reaction an S-(2-hydroxyacyl)glutathione + H2O = a 2-hydroxy carboxylate + glutathione + H(+). Its pathway is secondary metabolite metabolism; methylglyoxal degradation; (R)-lactate from methylglyoxal: step 2/2. Functionally, thiolesterase that catalyzes the hydrolysis of S-D-lactoyl-glutathione to form glutathione and D-lactic acid. This chain is Hydroxyacylglutathione hydrolase, found in Bartonella henselae (strain ATCC 49882 / DSM 28221 / CCUG 30454 / Houston 1) (Rochalimaea henselae).